A 206-amino-acid chain; its full sequence is 3-demethoxyubiquinol 3-hydroxylase (206 aa).

Fe cation-binding residues include Glu-55, Glu-85, His-88, Glu-137, Glu-169, and His-172.

It belongs to the COQ7 family. It depends on Fe cation as a cofactor.

The protein localises to the cell membrane. It catalyses the reaction a 5-methoxy-2-methyl-3-(all-trans-polyprenyl)benzene-1,4-diol + AH2 + O2 = a 3-demethylubiquinol + A + H2O. It participates in cofactor biosynthesis; ubiquinone biosynthesis. Catalyzes the hydroxylation of 2-nonaprenyl-3-methyl-6-methoxy-1,4-benzoquinol during ubiquinone biosynthesis. This is 3-demethoxyubiquinol 3-hydroxylase from Azoarcus sp. (strain BH72).